A 433-amino-acid polypeptide reads, in one-letter code: 23S rRNA (uracil(1939)-C(5))-methyltransferase RlmD (433 aa).

One can recognise a TRAM domain in the interval 10-68 (RTTTRQIITVSVNDLDSFGQGVARHNGKTLFIPGLLPQENAEVTVTEDKKQYARAKVVR). 4 residues coordinate [4Fe-4S] cluster: Cys81, Cys87, Cys90, and Cys162. Positions 265, 294, 299, 315, 342, and 363 each coordinate S-adenosyl-L-methionine. Cys389 functions as the Nucleophile in the catalytic mechanism.

It belongs to the class I-like SAM-binding methyltransferase superfamily. RNA M5U methyltransferase family. RlmD subfamily.

It carries out the reaction uridine(1939) in 23S rRNA + S-adenosyl-L-methionine = 5-methyluridine(1939) in 23S rRNA + S-adenosyl-L-homocysteine + H(+). Its function is as follows. Catalyzes the formation of 5-methyl-uridine at position 1939 (m5U1939) in 23S rRNA. In Shigella sonnei (strain Ss046), this protein is 23S rRNA (uracil(1939)-C(5))-methyltransferase RlmD.